Reading from the N-terminus, the 494-residue chain is MQKKYVVALDQGTTSSRAIVFDHDANIVSVSQREFTQLYPNPGWVEHDPMEIWASQSSVLIESLARAGIHSDAVAAIGITNQRETTIIWEKATGKPVYNAIVWQCRRSAEICEQLKAQGLEDYVRQNTGLLLDPYFSGTKIKWILDNVPDARAKAKRGELLFGTVDTWLLWKLTEGKVHVTDPTNAARTLLFNIHSLSWDSKLLEALDIPAAMLPEVKPSCSVYGTTRIAGEGSEIPLAGIAGDQQAALFGQLCVEQGMAKNTYGTGCFLLMNTGSKAVRSSHGLLTTVAVGAQGEVNYALEGSVFMGGATIQWLRDELGLIRDASDTEYFASKVADTNGVYLVPAFVGLGAPYWDPNARGALFGLTRGANRNHIIRAALESIAYQSKDLLDAMIKDSGVSLKRLKVDGGAVANDFLMQFQADITDVEVLRPSVCETTALGAAFLAGLAVGFWNSVTELEHKACIDTHFKPSINADYRQQLYAGWQDAVARTRS.

Thr13 serves as a coordination point for ADP. ATP contacts are provided by Thr13, Thr14, and Ser15. Residue Thr13 coordinates sn-glycerol 3-phosphate. Residue Arg17 participates in ADP binding. Sn-glycerol 3-phosphate contacts are provided by Arg83, Glu84, Tyr135, and Asp244. Arg83, Glu84, Tyr135, Asp244, and Gln245 together coordinate glycerol. Residues Thr266 and Gly309 each coordinate ADP. 4 residues coordinate ATP: Thr266, Gly309, Gln313, and Gly410. ADP-binding residues include Gly410 and Asn414.

Belongs to the FGGY kinase family.

The enzyme catalyses glycerol + ATP = sn-glycerol 3-phosphate + ADP + H(+). The protein operates within polyol metabolism; glycerol degradation via glycerol kinase pathway; sn-glycerol 3-phosphate from glycerol: step 1/1. With respect to regulation, inhibited by fructose 1,6-bisphosphate (FBP). Functionally, key enzyme in the regulation of glycerol uptake and metabolism. Catalyzes the phosphorylation of glycerol to yield sn-glycerol 3-phosphate. This is Glycerol kinase from Shewanella oneidensis (strain ATCC 700550 / JCM 31522 / CIP 106686 / LMG 19005 / NCIMB 14063 / MR-1).